A 76-amino-acid chain; its full sequence is MGSIRPSNIKRIAEEIVDNNPGIFNEDFENNKKILSEMLKNSVTKKTMNAIAGYVTRYILKKKSKEKSEMEQLGLA.

Belongs to the eukaryotic ribosomal protein eS17 family.

The protein is Small ribosomal subunit protein eS17 of Picrophilus torridus (strain ATCC 700027 / DSM 9790 / JCM 10055 / NBRC 100828 / KAW 2/3).